Consider the following 729-residue polypeptide: Fatty acid oxidation complex subunit alpha (729 aa).

The tract at residues 1–189 (MLYKGDTLYL…KIGLVDGVVK (189 aa)) is enoyl-CoA hydratase/isomerase. Position 296 (aspartate 296) interacts with substrate. The segment at 311 to 729 (ETPKQAAVLG…ARPVGDLKTA (419 aa)) is 3-hydroxyacyl-CoA dehydrogenase. Residues methionine 324, aspartate 343, 400 to 402 (VVE), lysine 407, and serine 429 each bind NAD(+). Residue histidine 450 is the For 3-hydroxyacyl-CoA dehydrogenase activity of the active site. An NAD(+)-binding site is contributed by asparagine 453. The substrate site is built by asparagine 500 and tyrosine 660. Residues 708–729 (RHNEPYYPPVEPARPVGDLKTA) are disordered.

In the N-terminal section; belongs to the enoyl-CoA hydratase/isomerase family. It in the C-terminal section; belongs to the 3-hydroxyacyl-CoA dehydrogenase family. As to quaternary structure, heterotetramer of two alpha chains (FadB) and two beta chains (FadA).

It carries out the reaction a (3S)-3-hydroxyacyl-CoA + NAD(+) = a 3-oxoacyl-CoA + NADH + H(+). It catalyses the reaction a (3S)-3-hydroxyacyl-CoA = a (2E)-enoyl-CoA + H2O. The enzyme catalyses a 4-saturated-(3S)-3-hydroxyacyl-CoA = a (3E)-enoyl-CoA + H2O. The catalysed reaction is (3S)-3-hydroxybutanoyl-CoA = (3R)-3-hydroxybutanoyl-CoA. It carries out the reaction a (3Z)-enoyl-CoA = a 4-saturated (2E)-enoyl-CoA. It catalyses the reaction a (3E)-enoyl-CoA = a 4-saturated (2E)-enoyl-CoA. It functions in the pathway lipid metabolism; fatty acid beta-oxidation. In terms of biological role, involved in the aerobic and anaerobic degradation of long-chain fatty acids via beta-oxidation cycle. Catalyzes the formation of 3-oxoacyl-CoA from enoyl-CoA via L-3-hydroxyacyl-CoA. It can also use D-3-hydroxyacyl-CoA and cis-3-enoyl-CoA as substrate. This chain is Fatty acid oxidation complex subunit alpha, found in Escherichia coli (strain K12 / MC4100 / BW2952).